The primary structure comprises 76 residues: DNA-directed RNA polymerase subunit Rpo10 (76 aa).

Positions 16, 19, 53, and 54 each coordinate Zn(2+).

Belongs to the archaeal Rpo10/eukaryotic RPB10 RNA polymerase subunit family. Part of the RNA polymerase complex. The cofactor is Zn(2+).

Its subcellular location is the cytoplasm. It carries out the reaction RNA(n) + a ribonucleoside 5'-triphosphate = RNA(n+1) + diphosphate. In terms of biological role, DNA-dependent RNA polymerase (RNAP) catalyzes the transcription of DNA into RNA using the four ribonucleoside triphosphates as substrates. This is DNA-directed RNA polymerase subunit Rpo10 from Archaeoglobus fulgidus (strain ATCC 49558 / DSM 4304 / JCM 9628 / NBRC 100126 / VC-16).